Reading from the N-terminus, the 264-residue chain is Agamous-like MADS-box protein AGL15 (264 aa).

The MADS-box domain occupies Arg3–Phe57. The region spanning Asn87 to Phe177 is the K-box domain. A disordered region spans residues Leu223–Val264. Positions Glu230–Pro244 are enriched in basic and acidic residues. Over residues Ser245–Thr257 the composition is skewed to low complexity.

Its subcellular location is the nucleus. Functionally, probable transcription factor. This chain is Agamous-like MADS-box protein AGL15 (AGL15), found in Brassica napus (Rape).